Here is a 427-residue protein sequence, read N- to C-terminus: Glutamate-1-semialdehyde 2,1-aminomutase (427 aa).

At lysine 265 the chain carries N6-(pyridoxal phosphate)lysine.

The protein belongs to the class-III pyridoxal-phosphate-dependent aminotransferase family. HemL subfamily. In terms of assembly, homodimer. Pyridoxal 5'-phosphate serves as cofactor.

It is found in the cytoplasm. It carries out the reaction (S)-4-amino-5-oxopentanoate = 5-aminolevulinate. The protein operates within porphyrin-containing compound metabolism; protoporphyrin-IX biosynthesis; 5-aminolevulinate from L-glutamyl-tRNA(Glu): step 2/2. The sequence is that of Glutamate-1-semialdehyde 2,1-aminomutase from Marinomonas sp. (strain MWYL1).